The following is a 339-amino-acid chain: Bifunctional phosphoglucose/phosphomannose isomerase (339 aa).

In terms of domain architecture, SIS spans 22 to 164 (ISVNVKAEDI…IEPVDDQIEE (143 aa)). 6 residues coordinate D-fructose 6-phosphate: Gly-41, Ser-42, Ser-83, Ser-85, Thr-88, and Arg-135. The active-site Proton acceptor is Glu-221. Residues His-237 and Lys-331 each contribute to the D-fructose 6-phosphate site. Catalysis depends on His-237, which acts as the Proton donor. The active-site Proton acceptor is Lys-331.

Belongs to the PGI/PMI family. Homodimer.

The catalysed reaction is alpha-D-glucose 6-phosphate = beta-D-fructose 6-phosphate. It carries out the reaction D-mannose 6-phosphate = D-fructose 6-phosphate. Its function is as follows. Dual specificity isomerase that catalyzes the isomerization of both glucose-6-phosphate and mannose-6-phosphate to fructose-6-phosphate. The protein is Bifunctional phosphoglucose/phosphomannose isomerase of Caldicellulosiruptor bescii (strain ATCC BAA-1888 / DSM 6725 / KCTC 15123 / Z-1320) (Anaerocellum thermophilum).